The chain runs to 33 residues: Pardaxin P-3 (33 aa).

The protein belongs to the pardaxin family. As to quaternary structure, in aqueous solution exists as a tetramer.

Its subcellular location is the secreted. It is found in the target cell membrane. In terms of biological role, exhibits unusual shark repellent and surfactant properties. Forms voltage-dependent, ion-permeable channels in membranes. At high concentration causes cell membrane lysis. The polypeptide is Pardaxin P-3 (Pardachirus pavoninus (Peacock sole)).